Here is a 522-residue protein sequence, read N- to C-terminus: N-acetylgalactosamine-6-sulfatase (522 aa).

The first 25 residues, 1 to 25 (MAAVAAATRWHLLLVLSAAGLGVTG), serve as a signal peptide directing secretion. The tract at residues 27 to 379 (PQPPNILLLL…PAMLQGRLTE (353 aa)) is catalytic domain. Ca(2+) is bound by residues Asp-38, Asp-39, and Cys-78. The Nucleophile role is filled by Cys-78. Cys-78 bears the 3-oxoalanine (Cys) mark. The active site involves His-141. Asn-203 carries N-linked (GlcNAc...) asparagine glycosylation. The Ca(2+) site is built by Asp-288 and Asn-289. A disulfide bridge links Cys-308 with Cys-419. The N-linked (GlcNAc...) asparagine glycan is linked to Asn-423. Disulfide bonds link Cys-489/Cys-518 and Cys-501/Cys-507.

Belongs to the sulfatase family. As to quaternary structure, homodimer. Ca(2+) is required as a cofactor. Post-translationally, the conversion to 3-oxoalanine (also known as C-formylglycine, FGly), of a serine or cysteine residue in prokaryotes and of a cysteine residue in eukaryotes, is critical for catalytic activity.

It is found in the lysosome. It carries out the reaction Hydrolysis of the 6-sulfate groups of the N-acetyl-D-galactosamine 6-sulfate units of chondroitin sulfate and of the D-galactose 6-sulfate units of keratan sulfate.. The chain is N-acetylgalactosamine-6-sulfatase (GALNS) from Sus scrofa (Pig).